Reading from the N-terminus, the 337-residue chain is D-alanine--D-alanine ligase (337 aa).

The 207-residue stretch at 124 to 330 folds into the ATP-grasp domain; the sequence is KMWFSALGIP…FTEYLSLVIN (207 aa). 154-209 is a binding site for ATP; sequence ALAQWGSIFVKAASQGSSVGCYKVDDSAKVAGVLKDAFGYAPYVIVEKTIKARELE. Aspartate 284, glutamate 297, and asparagine 299 together coordinate Mg(2+).

This sequence belongs to the D-alanine--D-alanine ligase family. Mg(2+) is required as a cofactor. Requires Mn(2+) as cofactor.

The protein resides in the cytoplasm. The catalysed reaction is 2 D-alanine + ATP = D-alanyl-D-alanine + ADP + phosphate + H(+). The protein operates within cell wall biogenesis; peptidoglycan biosynthesis. In terms of biological role, cell wall formation. The chain is D-alanine--D-alanine ligase from Shewanella baltica (strain OS185).